Reading from the N-terminus, the 31-residue chain is Kunitz-type serine protease inhibitor RsTIQ2 (31 aa).

The 31-residue stretch at 1–31 folds into the BPTI/Kunitz inhibitor domain; it reads EAVDFDSQCVPTADPGKCKFYFPMWNVNVFT.

Serine protease inhibitor. Inhibits trypsin, elastase, plasmin and kallikrein. This is Kunitz-type serine protease inhibitor RsTIQ2 from Rhipicephalus sanguineus (Brown dog tick).